The sequence spans 183 residues: Porphobilinogen deaminase (183 aa).

The protein belongs to the HMBS family. As to quaternary structure, monomer. The cofactor is dipyrromethane.

It catalyses the reaction 4 porphobilinogen + H2O = hydroxymethylbilane + 4 NH4(+). The protein operates within porphyrin-containing compound metabolism; protoporphyrin-IX biosynthesis; coproporphyrinogen-III from 5-aminolevulinate: step 2/4. Its function is as follows. Tetrapolymerization of the monopyrrole PBG into the hydroxymethylbilane pre-uroporphyrinogen in several discrete steps. The polypeptide is Porphobilinogen deaminase (hemC) (Yersinia intermedia).